Reading from the N-terminus, the 366-residue chain is Short-chain collagen C4 (366 aa).

Residues 1–14 are compositionally biased toward low complexity; the sequence is DTGPQGPQGVAGPP. Triple-helical region regions lie at residues 1 to 23 and 40 to 210; these read DTGP…KGDK and GPPG…NGAV. Residues 1 to 207 form a disordered region; the sequence is DTGPQGPQGV…QGPQGAPGSN (207 aa). A compositionally biased stretch (pro residues) spans 28-45; sequence YPPPPTCPTCPAGPPGAP. Composition is skewed to low complexity over residues 75–90 and 99–110; these read PGND…PGYD and TGAPGPQGPKGD. Residues 138-149 show a composition bias toward basic and acidic residues; that stretch reads DGQDGAKGDKGD. 2 stretches are compositionally biased toward low complexity: residues 150–168 and 189–201; these read QGPA…QGPA and QGPK…QGPQ.

The protein resides in the secreted. It is found in the extracellular space. Its subcellular location is the extracellular matrix. The chain is Short-chain collagen C4 from Ephydatia muelleri (Mueller's freshwater sponge).